Here is a 378-residue protein sequence, read N- to C-terminus: L-lactate dehydrogenase (378 aa).

Positions 1–378 constitute an FMN hydroxy acid dehydrogenase domain; that stretch reads MIISASTDYR…ELSRDSLVKR (378 aa). Tyr-24 serves as a coordination point for substrate. Residues Ser-106 and Gln-127 each coordinate FMN. Tyr-129 is a binding site for substrate. Position 155 (Thr-155) interacts with FMN. Arg-164 is a substrate binding site. Lys-251 is a binding site for FMN. The active-site Proton acceptor is the His-275. Arg-278 provides a ligand contact to substrate. Residue 306–330 coordinates FMN; it reads DSGIRTGLDVVRMLALGADCTMLGR.

This sequence belongs to the FMN-dependent alpha-hydroxy acid dehydrogenase family. The cofactor is FMN.

It localises to the cell inner membrane. The enzyme catalyses (S)-lactate + A = pyruvate + AH2. In terms of biological role, catalyzes the conversion of L-lactate to pyruvate. Is coupled to the respiratory chain. This Vibrio cholerae serotype O1 (strain ATCC 39315 / El Tor Inaba N16961) protein is L-lactate dehydrogenase.